Reading from the N-terminus, the 211-residue chain is Glutathione S-transferase class-mu 28 kDa isozyme (211 aa).

The region spanning 4 to 86 (DHIKVIYFNG…YMAKKHHMMG (83 aa)) is the GST N-terminal domain. Positions 10, 16, 41, 45, 53, 70, 71, and 104 each coordinate glutathione. One can recognise a GST C-terminal domain in the interval 88 to 211 (TEEEYYNVEK…YLSDRAATPF (124 aa)).

This sequence belongs to the GST superfamily. Mu family. In terms of assembly, homodimer.

It catalyses the reaction RX + glutathione = an S-substituted glutathione + a halide anion + H(+). Conjugation of reduced glutathione to a wide number of exogenous and endogenous hydrophobic electrophiles. Its function is as follows. GST isoenzymes appear to play a central role in the parasite detoxification system. Other functions are also suspected including a role in increasing the solubility of haematin in the parasite gut. In Schistosoma haematobium (Blood fluke), this protein is Glutathione S-transferase class-mu 28 kDa isozyme.